Reading from the N-terminus, the 285-residue chain is Bifunctional protein FolD (285 aa).

NADP(+) contacts are provided by residues Gly-165–Ser-167 and Ile-232.

This sequence belongs to the tetrahydrofolate dehydrogenase/cyclohydrolase family. In terms of assembly, homodimer.

The catalysed reaction is (6R)-5,10-methylene-5,6,7,8-tetrahydrofolate + NADP(+) = (6R)-5,10-methenyltetrahydrofolate + NADPH. It carries out the reaction (6R)-5,10-methenyltetrahydrofolate + H2O = (6R)-10-formyltetrahydrofolate + H(+). Its pathway is one-carbon metabolism; tetrahydrofolate interconversion. In terms of biological role, catalyzes the oxidation of 5,10-methylenetetrahydrofolate to 5,10-methenyltetrahydrofolate and then the hydrolysis of 5,10-methenyltetrahydrofolate to 10-formyltetrahydrofolate. This chain is Bifunctional protein FolD, found in Sulfurihydrogenibium sp. (strain YO3AOP1).